Consider the following 233-residue polypeptide: uncharacterized protein (233 aa).

Positions 1–10 (MSSKLSKKKL) are enriched in basic residues. The disordered stretch occupies residues 1–90 (MSSKLSKKKL…KRQKGKNNDR (90 aa)). The span at 11-56 (KSLEYRSKKFDKKSQSLEEHEKKVQQKNEELEKKAADKISRDELPE) shows a compositional bias: basic and acidic residues. The span at 76-85 (KTLKSKRQKG) shows a compositional bias: basic residues. The RRM domain occupies 92 to 171 (VILFVGNLPK…RKINIELTAG (80 aa)). 2 stretches are compositionally biased toward basic and acidic residues: residues 194 to 216 (MRQRVASEEQQAGEEKMARKAVA) and 224 to 233 (IHPDRLRLLQ). The segment at 194–233 (MRQRVASEEQQAGEEKMARKAVADEGLESGIHPDRLRLLQ) is disordered.

It localises to the nucleus. The protein resides in the nucleolus. This is an uncharacterized protein from Schizosaccharomyces pombe (strain 972 / ATCC 24843) (Fission yeast).